A 346-amino-acid polypeptide reads, in one-letter code: MAVPPVTELTDRARAIFQLVVEGYLESGQPVGSKTLSQEQSLDLSPASIRSVLADLESIGLLAAPHTSAGRMPTETGLRLFVDGMMQVAEPTRAEREAIAQRLKRSGPIEQALEATSSMLSDLSGAAGMVMVPSREPRLAQISLVPLGQGKALAVLVGEDGAIENRVIETGDTPAHVLEQVSNFITARLAGRTLAEATAAMRKEIADGKSALDTASQNLVERGLAVWTEDAAERPVLIVRGQANLLDESALEDLDRVRSLLDDLENKQSVAELLETARDAEATRIFIGSENRLFALSGSSVIASPYRDREGKVVGVLGVIGPTRLNYARVVPMVDFTARSLGKLIG.

Belongs to the HrcA family.

In terms of biological role, negative regulator of class I heat shock genes (grpE-dnaK-dnaJ and groELS operons). Prevents heat-shock induction of these operons. The sequence is that of Heat-inducible transcription repressor HrcA from Erythrobacter litoralis (strain HTCC2594).